Here is a 269-residue protein sequence, read N- to C-terminus: Tetrahydromethanopterin S-methyltransferase subunit C (269 aa).

The next 8 membrane-spanning stretches (helical) occupy residues 18–38 (VLVIGAVLSLIGMYIAHFVPS), 39–59 (LAMLLGGLLAAGACVAGANTT), 62–82 (VAAYGLGTGVPSIGMVSLGMG), 84–104 (ISALAGVLIPSVLAGSVALPF), 106–126 (LVLATPIIAAVVAIIVGFIVG), 152–172 (ALAILGFCTAFAGGFSADLII), 180–200 (IIALAFIAAGMSILHPFNACI), and 222–242 (LVFSIAKLDIVSILVAAVFWI).

Belongs to the MtrC family. In terms of assembly, the complex is composed of 8 subunits; MtrA, MtrB, MtrC, MtrD, MtrE, MtrF, MtrG and MtrH.

The protein localises to the cell membrane. The enzyme catalyses 5-methyl-5,6,7,8-tetrahydromethanopterin + coenzyme M + 2 Na(+)(in) = 5,6,7,8-tetrahydromethanopterin + methyl-coenzyme M + 2 Na(+)(out). It participates in one-carbon metabolism; methanogenesis from CO(2); methyl-coenzyme M from 5,10-methylene-5,6,7,8-tetrahydromethanopterin: step 2/2. In terms of biological role, part of a complex that catalyzes the formation of methyl-coenzyme M and tetrahydromethanopterin from coenzyme M and methyl-tetrahydromethanopterin. This is an energy-conserving, sodium-ion translocating step. This is Tetrahydromethanopterin S-methyltransferase subunit C from Methanococcus vannielii (strain ATCC 35089 / DSM 1224 / JCM 13029 / OCM 148 / SB).